The sequence spans 455 residues: Homeobox protein 14 (455 aa).

Composition is skewed to low complexity over residues 1-16 (MNHNNNNYDFDNKNNS), 24-39 (SSRSSSSRSSNRSSSG), 81-118 (TTTTTTTTTTTTTTTTTKNENISSSESENSSSRVESPN), 179-239 (ESPN…SPSF), and 263-294 (NNNNNNNNNYNNNNNNNNNNNNNNNNTNTNNN). Disordered stretches follow at residues 1–53 (MNHN…SSIN), 67–121 (KQTK…NCNK), 178–239 (SESP…SPSF), and 258–296 (TLLSQNNNNNNNNNYNNNNNNNNNNNNNNNNTNTNNNGD). 2 consecutive DNA-binding regions (homeobox) follow at residues 310–369 (KSGQ…SKSG) and 372–431 (SYAK…NKLS). The interval 431 to 455 (SSKANQDNDNNNNNENNDDSYSDEG) is disordered. Low complexity predominate over residues 435-445 (NQDNDNNNNNE). Positions 446–455 (NNDDSYSDEG) are enriched in acidic residues.

The protein localises to the nucleus. Functionally, putative transcription factor. In Dictyostelium discoideum (Social amoeba), this protein is Homeobox protein 14 (hbx14).